The following is a 301-amino-acid chain: GPN-loop GTPase 3 (301 aa).

13 to 18 (GAGKST) is a binding site for GTP. The Gly-Pro-Asn (GPN)-loop; involved in dimer interface motif lies at 70-72 (GPN). GTP is bound at residue 176 to 179 (SKMD). A disordered region spans residues 212–232 (IAEGQDAEDDESKAPDEKDQV). Basic and acidic residues predominate over residues 223–232 (SKAPDEKDQV).

This sequence belongs to the GPN-loop GTPase family. Heterodimers with GPN1 or GPN2. Binds to RNA polymerase II (RNAPII).

In terms of biological role, small GTPase required for proper nuclear import of RNA polymerase II and III (RNAPII and RNAPIII). May act at an RNAP assembly step prior to nuclear import. This is GPN-loop GTPase 3 from Gibberella zeae (strain ATCC MYA-4620 / CBS 123657 / FGSC 9075 / NRRL 31084 / PH-1) (Wheat head blight fungus).